Here is a 263-residue protein sequence, read N- to C-terminus: MSLHPVILLVLVLCLGWKINTQEGSLPDITIFPNSSLMISQGTFVTVVCSYSDKHDLYNMVRLEKDGSTFMEKSTEPYKTEDEFEIGPVNETITGHYSCIYSKGITWSERSKTLELKVIKENVIQTPAPGPTSDTSWLKTYSIYIFTVVSVIFLLCLSALLFCFLRHRQKKQGLPNNKRQQQRPEERLNLATNGLEMTPDIVADDRLPEDRWTETWTPVAGDLQEVTYIQLDHHSLTQRAVGAVTSQSTDMAESSTYAAIIRH.

Positions methionine 1 to threonine 21 are cleaved as a signal peptide. Residues glutamine 22–tyrosine 144 lie on the Extracellular side of the membrane. The 89-residue stretch at proline 27–glutamate 115 folds into the Ig-like C2-type domain. Residues asparagine 34 and asparagine 90 are each glycosylated (N-linked (GlcNAc...) asparagine). The cysteines at positions 49 and 99 are disulfide-linked. Residues isoleucine 145 to leucine 165 form a helical membrane-spanning segment. Over arginine 166–histidine 263 the chain is Cytoplasmic. 2 consecutive short sequence motifs (ITIM motif) follow at residues valine 226–leucine 231 and serine 255–isoleucine 260. A phosphotyrosine mark is found at tyrosine 228 and tyrosine 257.

Interacts with SH2 domains of tyrosine-protein phosphatases PTPN6 and PTPN11. The interaction with PTPN6 is constitutive. Interacts with the SH2 domain of CSK. Binds with high affinity to extracellular matrix collagens, the interaction is functionally important. Post-translationally, phosphorylation at Tyr-228 and Tyr-257 activates it. May be phosphorylated by LCK. In terms of processing, N-glycosylated. As to expression, expressed in lymphoid organs and in cell lines of hemopoietic origin.

Its subcellular location is the cell membrane. Functionally, functions as an inhibitory receptor that plays a constitutive negative regulatory role on cytolytic function of natural killer (NK) cells, B-cells and T-cells. Activation by Tyr phosphorylation results in recruitment and activation of the phosphatases PTPN6 and PTPN11. It also reduces the increase of intracellular calcium evoked by B-cell receptor ligation. May also play its inhibitory role independently of SH2-containing phosphatases. Modulates cytokine production in CD4+ T-cells, down-regulating IL2 and IFNG production while inducing secretion of transforming growth factor beta. Also down-regulates IgG and IgE production in B-cells as well as IL8, IL10 and TNF secretion. Inhibits proliferation and induces apoptosis in myeloid leukemia cell lines as well as prevents nuclear translocation of NF-kappa-B p65 subunit/RELA and phosphorylation of I-kappa-B alpha/CHUK in these cells. Inhibits the differentiation of peripheral blood precursors towards dendritic cells. The polypeptide is Leukocyte-associated immunoglobulin-like receptor 1 (Lair1) (Mus musculus (Mouse)).